The chain runs to 185 residues: Threonylcarbamoyl-AMP synthase (185 aa).

Positions 4 to 185 (SFRAQCAARV…LVTGQVIRPA (182 aa)) constitute a YrdC-like domain.

It belongs to the SUA5 family. TsaC subfamily.

The protein localises to the cytoplasm. The catalysed reaction is L-threonine + hydrogencarbonate + ATP = L-threonylcarbamoyladenylate + diphosphate + H2O. In terms of biological role, required for the formation of a threonylcarbamoyl group on adenosine at position 37 (t(6)A37) in tRNAs that read codons beginning with adenine. Catalyzes the conversion of L-threonine, HCO(3)(-)/CO(2) and ATP to give threonylcarbamoyl-AMP (TC-AMP) as the acyladenylate intermediate, with the release of diphosphate. The polypeptide is Threonylcarbamoyl-AMP synthase (Pseudomonas paraeruginosa (strain DSM 24068 / PA7) (Pseudomonas aeruginosa (strain PA7))).